The following is a 503-amino-acid chain: Annexin A11 (503 aa).

3 stretches are compositionally biased toward pro residues: residues 1–17, 80–145, and 155–169; these read MSYP…PPAP, GYPP…PYPG, and SPVP…PSYP. Disordered regions lie at residues 1-35 and 56-178; these read MSYP…MPPI and AANM…GTVT. Annexin repeat units follow at residues 198-269, 270-341, 353-425, and 429-500; these read FDPL…ALMK, TPIL…SLSQ, SLVQ…AVVK, and NTPA…KICG. N6-acetyllysine is present on residues K246 and K253. K477 bears the N6-acetyllysine mark.

Belongs to the annexin family. In terms of assembly, interacts with PDCD6 in a calcium-dependent manner. Interacts with KIF23 during cytokinesis. Interacts with S100A6.

It localises to the cytoplasm. It is found in the melanosome. Its subcellular location is the nucleus envelope. The protein resides in the nucleus. The protein localises to the nucleoplasm. It localises to the cytoskeleton. It is found in the spindle. In terms of biological role, required for midbody formation and completion of the terminal phase of cytokinesis. Binds specifically to calcyclin in a calcium-dependent manner. This Oryctolagus cuniculus (Rabbit) protein is Annexin A11 (ANXA11).